We begin with the raw amino-acid sequence, 229 residues long: Lipoprotein-releasing system ATP-binding protein LolD (229 aa).

In terms of domain architecture, ABC transporter spans 7–229 (LQCINLTKSF…KNGQLFNNKN (223 aa)). Residue 43 to 50 (GKSGSGKS) coordinates ATP.

It belongs to the ABC transporter superfamily. Lipoprotein translocase (TC 3.A.1.125) family. The complex is composed of two ATP-binding proteins (LolD) and two transmembrane proteins (LolC and LolE).

It is found in the cell inner membrane. In terms of biological role, part of the ABC transporter complex LolCDE involved in the translocation of mature outer membrane-directed lipoproteins, from the inner membrane to the periplasmic chaperone, LolA. Responsible for the formation of the LolA-lipoprotein complex in an ATP-dependent manner. The polypeptide is Lipoprotein-releasing system ATP-binding protein LolD (Buchnera aphidicola subsp. Schizaphis graminum (strain Sg)).